A 70-amino-acid chain; its full sequence is Alpha-elapitoxin-Ast2a (70 aa).

Intrachain disulfides connect Cys3/Cys20, Cys13/Cys41, Cys26/Cys30, Cys45/Cys56, and Cys57/Cys62. Position 70 is a serine amide (Ser70).

The protein belongs to the three-finger toxin family. Long-chain subfamily. Type II alpha-neurotoxin sub-subfamily. Expressed by the venom gland.

The protein localises to the secreted. Its function is as follows. Binds with high affinity to muscular (alpha-1/CHRNA1) and neuronal (alpha-7/CHRNA7) nicotinic acetylcholine receptor (nAChR) and inhibits acetylcholine from binding to the receptor, thereby impairing neuromuscular and neuronal transmission. The sequence is that of Alpha-elapitoxin-Ast2a from Hydrophis stokesii (Stokes's sea snake).